Consider the following 162-residue polypeptide: Caveolin-2 (162 aa).

At 1-86 (MGLETEKADV…FEISKYVVYK (86 aa)) the chain is on the cytoplasmic side. At tyrosine 19 the chain carries Phosphotyrosine; by SRC. Residues serine 20 and serine 23 each carry the phosphoserine modification. A Phosphotyrosine; by SRC modification is found at tyrosine 27. Residue serine 36 is modified to Phosphoserine. Residues 87 to 107 (FLTVFLAIPLAFAAGILFATL) constitute an intramembrane region (helical). Over 108–162 (SCLHIWIIMPFVKTCLMVLPSVQTVWKTVTDVVIAPLCASVGRSFSSVSLQLSHD) the chain is Cytoplasmic.

This sequence belongs to the caveolin family. In terms of assembly, monomer or homodimer. Interacts with CAV1; the interaction forms a stable heterooligomeric complex that is required for targeting to lipid rafts and for caveolae formation. Tyrosine phosphorylated forms do not form heterooligomers with the Tyr-19-phosphorylated form existing as a monomer or dimer, and the Tyr-27-form as a monomer only. Interacts (tyrosine phosphorylated form) with the SH2 domain-containing proteins, RASA1, NCK1 and SRC. Interacts (tyrosine phosphorylated form) with INSR, the interaction (Tyr-27-phosphorylated form) is increased on insulin stimulation. Interacts (Tyr-19 phosphorylated form) with MAPK1 (phosphorylated form); the interaction, promoted by insulin, leads to nuclear location and MAPK1 activation. Interacts with STAT3; the interaction is increased on insulin-induced tyrosine phosphorylation leading to STAT activation. In terms of processing, phosphorylated on serine and tyrosine residues. CAV1 promotes phosphorylation on Ser-23 which then targets the complex to the plasma membrane, lipid rafts and caveolae. Phosphorylation on Ser-36 appears to modulate mitosis in endothelial cells. Phosphorylation on both Tyr-19 and Tyr-27 is required for insulin-induced 'Ser-727' phosphorylation of STAT3 and its activation. Phosphorylation on Tyr-19 is required for insulin-induced phosphorylation of MAPK1 and DNA binding of STAT3. Tyrosine phosphorylation is induced by both EGF and insulin (By. similarity).

The protein resides in the nucleus. It is found in the cytoplasm. It localises to the golgi apparatus membrane. The protein localises to the cell membrane. Its subcellular location is the membrane. The protein resides in the caveola. Its function is as follows. May act as a scaffolding protein within caveolar membranes. Interacts directly with G-protein alpha subunits and can functionally regulate their activity. Acts as an accessory protein in conjunction with CAV1 in targeting to lipid rafts and driving caveolae formation. The Ser-36 phosphorylated form has a role in modulating mitosis in endothelial cells. Positive regulator of cellular mitogenesis of the MAPK signaling pathway. Required for the insulin-stimulated nuclear translocation and activation of MAPK1 and STAT3, and the subsequent regulation of cell cycle progression. This chain is Caveolin-2 (CAV2), found in Loxodonta africana (African elephant).